Reading from the N-terminus, the 312-residue chain is Apolipoprotein E (312 aa).

The N-terminal stretch at M1–A18 is a signal peptide. 8 repeat units span residues V72–G93, P94–G115, A116–G137, Q138–M159, R160–E181, R182–A203, N204–R225, and G226–E247. Positions V72–E247 are 8 X 22 AA approximate tandem repeats. M135 is subject to Methionine sulfoxide. A Phosphoserine modification is found at S139. The interval H150 to R160 is LDL and other lipoprotein receptors binding. Positions H150 to R160 are LDL receptor binding. M154–R157 serves as a coordination point for heparin. The tract at residues T202–M282 is lipid-binding and lipoprotein association. S221–L228 provides a ligand contact to heparin. The segment at Q258–Q312 is homooligomerization. The specificity for association with VLDL stretch occupies residues R270–M282.

The protein belongs to the apolipoprotein A1/A4/E family. In terms of assembly, homotetramer. May interact with ABCA1; functionally associated with ABCA1 in the biogenesis of HDLs. May interact with APP/A4 amyloid-beta peptide; the interaction is extremely stable in vitro but its physiological significance is unclear. May interact with MAPT. May interact with MAP2. In the cerebrospinal fluid, interacts with secreted SORL1. Interacts with PMEL; this allows the loading of PMEL luminal fragment on ILVs to induce fibril nucleation. Post-translationally, APOE exists as multiple glycosylated and sialylated glycoforms within cells and in plasma. The extent of glycosylation and sialylation are tissue and context specific. Glycated in plasma VLDL. In terms of processing, phosphorylated by FAM20C in the extracellular medium.

It is found in the secreted. Its subcellular location is the extracellular space. The protein localises to the extracellular matrix. It localises to the extracellular vesicle. The protein resides in the endosome. It is found in the multivesicular body. In terms of biological role, APOE is an apolipoprotein, a protein associating with lipid particles, that mainly functions in lipoprotein-mediated lipid transport between organs via the plasma and interstitial fluids. APOE is a core component of plasma lipoproteins and is involved in their production, conversion and clearance. Apolipoproteins are amphipathic molecules that interact both with lipids of the lipoprotein particle core and the aqueous environment of the plasma. As such, APOE associates with chylomicrons, chylomicron remnants, very low density lipoproteins (VLDL) and intermediate density lipoproteins (IDL) but shows a preferential binding to high-density lipoproteins (HDL). It also binds a wide range of cellular receptors including the LDL receptor/LDLR and the very low-density lipoprotein receptor/VLDLR that mediate the cellular uptake of the APOE-containing lipoprotein particles. Finally, APOE also has a heparin-binding activity and binds heparan-sulfate proteoglycans on the surface of cells, a property that supports the capture and the receptor-mediated uptake of APOE-containing lipoproteins by cells. In Rattus norvegicus (Rat), this protein is Apolipoprotein E (Apoe).